The sequence spans 765 residues: Probable glycosyltransferase STELLO2 (765 aa).

The Cytoplasmic portion of the chain corresponds to 1–43 (MLVQDRVAPKPPKSRIRELPSRDRFAEPKILDFSSWVSDNVYR). The helical transmembrane segment at 44–64 (IVIIFLFIVTVAAFFFLYNTT) threads the bilayer. The Lumenal segment spans residues 65–765 (DTASLLCFQS…EGDPLLMELV (701 aa)). N-linked (GlcNAc...) asparagine glycosylation is found at N235 and N723.

This sequence belongs to the STELLO family. Homo- and heterodimer with STL1. Interacts with CESA1, CESA3, CESA4, CESA6, CESA7 and CESA8, but not with GOT1. In terms of tissue distribution, expressed in cells that are expanding or producing secondary cell walls.

It is found in the golgi apparatus membrane. Its function is as follows. Probable glycosyltransferase regulating the assembly and trafficking of cellulose synthase complexes. The protein is Probable glycosyltransferase STELLO2 of Arabidopsis thaliana (Mouse-ear cress).